A 129-amino-acid chain; its full sequence is M-zodatoxin-Lt8d (129 aa).

The signal sequence occupies residues 1–20 (MKYFVVALALVAAFACIAES). A propeptide spanning residues 21–60 (KPAESEHELAEVEEENELADLEDAVWLEHLADLSDLEEAR) is cleaved from the precursor. The short motif at 57–60 (EEAR) is the Processing quadruplet motif element.

In terms of processing, cleavage of the propeptide depends on the processing quadruplet motif (XXXR, with at least one of X being E). Expressed by the venom gland.

The protein localises to the secreted. In terms of biological role, insecticidal, cytolytic and antimicrobial peptide. Forms voltage-dependent, ion-permeable channels in membranes. At high concentration causes cell membrane lysis. This Lachesana tarabaevi (Spider) protein is M-zodatoxin-Lt8d (cit 1-4).